The sequence spans 332 residues: Hdr-like menaquinol oxidoreductase cytochrome b-like subunit (332 aa).

The next 5 helical transmembrane spans lie at 3–23 (GVIF…IGVI), 97–117 (DARW…LVLI), 143–163 (VFIP…FLLW), 177–197 (LPSD…GNVM), and 230–250 (IEPI…YFPF).

As to quaternary structure, consists of five subunits: an integral membrane subunit, a cytochrome b-like subunit, a cytochrome c subunit and two iron-sulfur subunits.

The protein resides in the cell membrane. In terms of biological role, has menaquinol-oxidizing activity. HmeC and HmeD subunits may together mediate electron transfer from menaquinol to an unidentified electron acceptor on the cytoplasmic side of the membrane. This chain is Hdr-like menaquinol oxidoreductase cytochrome b-like subunit (hmeC), found in Archaeoglobus fulgidus (strain ATCC 49558 / DSM 4304 / JCM 9628 / NBRC 100126 / VC-16).